The sequence spans 798 residues: Nucleolin homolog 1 (798 aa).

The disordered stretch occupies residues 1-548; sequence MGFDSPRGRG…IISEEERRRQ (548 aa). Positions 8–34 are enriched in gly residues; it reads GRGGGGFRGGRGGGSGFTPRGGGGGFR. 3 stretches are compositionally biased toward basic and acidic residues: residues 59–75, 88–98, and 106–116; these read GGDR…DREG, GGDRGGFRGGD, and GGDRGNFRGGD. Composition is skewed to gly residues over residues 150 to 164 and 171 to 184; these read RGGG…GRGG and GGRG…GGSR. Acidic residues-rich tracts occupy residues 196–205, 226–242, 258–278, and 287–317; these read SDGDDDEEEE, DDSG…DEEP, EDSD…DDDA, and VEED…EETE. Polar residues predominate over residues 328–350; the sequence is SLKSVDSTKGKQVNLSKVATPTT. Composition is skewed to acidic residues over residues 378–404 and 424–450; these read DDDS…EEED and IEED…EEDT. A compositionally biased stretch (low complexity) spans 467-476; that stretch reads AANRAAASAA. The segment covering 478–504 has biased composition (acidic residues); it reads DSDEDEDEEDEEDVEEEDEEEEEEEDI. A compositionally biased stretch (basic and acidic residues) spans 532–548; it reads VKSDGKSIISEEERRRQ. The RRM domain maps to 638–713; sequence LQLFINALPG…HLVDVFYARH (76 aa). Residues 736–798 are disordered; it reads PKVAADSSGD…FKKTGFKGKK (63 aa). A compositionally biased stretch (acidic residues) spans 743-762; sequence SGDDSEEVASSDEGIQEVEE. Positions 783–798 are enriched in basic residues; it reads QQKKPQFKKTGFKGKK.

In terms of assembly, identified in an mRNP granule complex containing untranslated mRNAs.

The protein resides in the nucleus. It localises to the nucleolus. Nucleolin is the major nucleolar protein of growing eukaryotic cells. It is found associated with intranucleolar chromatin and pre-ribosomal particles. It induces chromatin decondensation by binding to histone H1. It is thought to play a role in pre-rRNA transcription and ribosome assembly. May play a role in the process of transcriptional elongation. Involved in phase separation into sub-nucleolar condensates. This Caenorhabditis elegans protein is Nucleolin homolog 1.